The primary structure comprises 122 residues: Serum amyloid A-3 protein (122 aa).

The signal sequence occupies residues 1 to 18 (MKPSIAIILCILILGVDS). Residues 87–122 (TGHGAEDSRADQFANEWGRSGKDPNHFRPAGLPKRY) are disordered.

Belongs to the SAA family. In terms of tissue distribution, found in various tissues.

It localises to the secreted. In terms of biological role, major acute phase reactant. Apolipoprotein of the HDL complex. In vitro exhibits antimicrobial activity against Escherichia coli, Streptococcus uberis and Pseudomonas aeruginosa. The polypeptide is Serum amyloid A-3 protein (Saa3) (Mus musculus (Mouse)).